Reading from the N-terminus, the 145-residue chain is uncharacterized protein (145 aa).

A helical transmembrane segment spans residues 16-36; it reads VLAYLLQLSASLVLPVAIWLI.

The protein localises to the mitochondrion membrane. This is an uncharacterized protein from Arabidopsis thaliana (Mouse-ear cress).